Reading from the N-terminus, the 210-residue chain is Somatotropin-1 (210 aa).

Positions 1 to 22 (MARALVLLSVVLVSLLVNQGRA) are cleaved as a signal peptide. His-38 is a binding site for Zn(2+). A disulfide bond links Cys-71 and Cys-183. A Zn(2+)-binding site is contributed by Glu-192. Cys-200 and Cys-208 are joined by a disulfide.

This sequence belongs to the somatotropin/prolactin family.

It localises to the secreted. In terms of biological role, growth hormone plays an important role in growth control and is involved in the regulation of several anabolic processes. Implicated as an osmoregulatory substance important for seawater adaptation. This chain is Somatotropin-1 (gh1), found in Carassius auratus (Goldfish).